The following is a 525-amino-acid chain: UPF0288 protein MM_0912 (525 aa).

It belongs to the UPF0288 family.

The sequence is that of UPF0288 protein MM_0912 from Methanosarcina mazei (strain ATCC BAA-159 / DSM 3647 / Goe1 / Go1 / JCM 11833 / OCM 88) (Methanosarcina frisia).